The primary structure comprises 348 residues: MTAPSQVLKIRCPDDWHLHLRDGDMLKTVVPYTSEIYGRAIVMPNLAPPVTTVEAAVAYRQRILDAVPAGHDFTPLMTCYLTDSLDPNELERGFNEGVFTAAKLYPANATTNSSHGVTSVDAIMPVLERMEKIGMPLLVHGEVTHADIDIFDREARFIESVMEPLRQRLTALKVVFEHITTKDAADYVRDGNERLAATITPQHLMFNRNHMLVGGVRPHLYCLPILKRNIHQQALRELVASGFNRVFLGTDSAPHARHRKESSCGCAGCFNAPTALGSYATVFEEMNALQHFEAFCSVNGPQFYGLPVNDTFIELVREEQQVAESIALTDDTLVPFLAGETVRWSVKQ.

Histidine 17 and histidine 19 together coordinate Zn(2+). Substrate-binding positions include 19-21 (HLR) and asparagine 45. 3 residues coordinate Zn(2+): lysine 103, histidine 140, and histidine 178. At lysine 103 the chain carries N6-carboxylysine. Histidine 140 contacts substrate. Leucine 223 contributes to the substrate binding site. Aspartate 251 is a Zn(2+) binding site. Residue aspartate 251 is part of the active site. Residues histidine 255 and alanine 267 each coordinate substrate.

It belongs to the metallo-dependent hydrolases superfamily. DHOase family. Class II DHOase subfamily. As to quaternary structure, homodimer. Zn(2+) is required as a cofactor.

It catalyses the reaction (S)-dihydroorotate + H2O = N-carbamoyl-L-aspartate + H(+). The protein operates within pyrimidine metabolism; UMP biosynthesis via de novo pathway; (S)-dihydroorotate from bicarbonate: step 3/3. Its function is as follows. Catalyzes the reversible cyclization of carbamoyl aspartate to dihydroorotate. The sequence is that of Dihydroorotase from Escherichia coli O6:H1 (strain CFT073 / ATCC 700928 / UPEC).